The chain runs to 543 residues: Secreted effector protein SptP (543 aa).

Residues 35–139 (TDKAYVAPEK…FINIIKNKDN (105 aa)) are chaperone-binding. A Bacterial Rho-GAP domain is found at 162–293 (DVGAESKQPL…TAEFEKIKAG (132 aa)). The region spanning 315–543 (IPINQQTQVK…QAQLLMTTAS (229 aa)) is the Tyrosine-protein phosphatase domain. Catalysis depends on Cys481, which acts as the Phosphocysteine intermediate.

Forms a complex with SicP.

It localises to the secreted. The protein localises to the host cytoplasm. It catalyses the reaction O-phospho-L-tyrosyl-[protein] + H2O = L-tyrosyl-[protein] + phosphate. Functionally, effector proteins function to alter host cell physiology and promote bacterial survival in host tissues. This protein includes tyrosine phosphatase and GTPase activating protein (GAP) activities. After bacterial internalization, GAP mediates the reversal of the cytoskeletal changes induced by SopE. This function is independent of its tyrosine phosphatase activity, which remains unclear. The protein is Secreted effector protein SptP (sptP) of Salmonella paratyphi A (strain ATCC 9150 / SARB42).